The chain runs to 263 residues: HTH-type transcriptional repressor NanR (263 aa).

Residues 1 to 22 form a disordered region; sequence MGLMNAFDSQTEDSSPAIGRNL. Residues 30–98 form the HTH gntR-type domain; it reads KKLSEMVEEE…NGERARVSRP (69 aa). The segment at residues 58–77 is a DNA-binding region (H-T-H motif); the sequence is ERELMAFFNVGRPSVREALA.

It belongs to the NanR family.

Functionally, transcriptional repressor that controls expression of the genes required for the catabolism of sialic acids. In Shigella sonnei (strain Ss046), this protein is HTH-type transcriptional repressor NanR.